The chain runs to 870 residues: Large structural phosphoprotein (870 aa).

A compositionally biased stretch (basic and acidic residues) spans 612–649 (NDRDVLRGGKGNSKDLHSGGNAKKKEMSGKFNDDKEMT). Disordered regions lie at residues 612 to 662 (NDRD…LMGD) and 840 to 870 (QDGETDENTVSGPGVAESLDIEAKGESAIAS).

The protein belongs to the herpesviridae large structural phosphoprotein family. Phosphorylated at multiple sites.

The protein localises to the virion tegument. The sequence is that of Large structural phosphoprotein (U11) from Human herpesvirus 6A (strain Uganda-1102) (HHV-6 variant A).